Here is an 842-residue protein sequence, read N- to C-terminus: MutS protein homolog him-14 (842 aa).

The tract at residues 1 to 21 (MYSNKSFQRRQRQQVAESRSE) is disordered. Residue 588-595 (GPNMAGKS) coordinates ATP.

This sequence belongs to the DNA mismatch repair MutS family. In terms of assembly, heterooligomer of him-14 and msh-5.

Its subcellular location is the nucleus. Its function is as follows. Required during the pachytene stage of meiotic prophase for the formation of crossovers between homologous chromosomes. Together with msh-5 and zhp-3 plays a role in the activation of DNA damage-dependent apoptosis at the DNA damage checkpoint in pachytene cells. Not needed for pairing or synapsis. May promote crossing over by interfering with Holliday junction branch migration. Has no apparent role in DNA mismatch repair. The polypeptide is MutS protein homolog him-14 (Caenorhabditis elegans).